The primary structure comprises 447 residues: Tubulin beta-1 chain (447 aa).

Glutamine 11, glutamate 69, serine 138, glycine 142, threonine 143, glycine 144, asparagine 204, and asparagine 226 together coordinate GTP. Glutamate 69 lines the Mg(2+) pocket.

This sequence belongs to the tubulin family. In terms of assembly, dimer of alpha and beta chains. A typical microtubule is a hollow water-filled tube with an outer diameter of 25 nm and an inner diameter of 15 nM. Alpha-beta heterodimers associate head-to-tail to form protofilaments running lengthwise along the microtubule wall with the beta-tubulin subunit facing the microtubule plus end conferring a structural polarity. Microtubules usually have 13 protofilaments but different protofilament numbers can be found in some organisms and specialized cells. Mg(2+) serves as cofactor.

The protein resides in the cytoplasm. It is found in the cytoskeleton. Functionally, tubulin is the major constituent of microtubules, a cylinder consisting of laterally associated linear protofilaments composed of alpha- and beta-tubulin heterodimers. Microtubules grow by the addition of GTP-tubulin dimers to the microtubule end, where a stabilizing cap forms. Below the cap, tubulin dimers are in GDP-bound state, owing to GTPase activity of alpha-tubulin. The sequence is that of Tubulin beta-1 chain from Geotrichum candidum (Oospora lactis).